A 463-amino-acid polypeptide reads, in one-letter code: L-seryl-tRNA(Sec) selenium transferase (463 aa).

Position 295 is an N6-(pyridoxal phosphate)lysine (Lys-295).

It belongs to the SelA family. In terms of assembly, homodecamer; pentamer of dimers. Binds only one seryl-tRNA(Sec) per dimer. The cofactor is pyridoxal 5'-phosphate.

It localises to the cytoplasm. It carries out the reaction L-seryl-tRNA(Sec) + selenophosphate + H(+) = L-selenocysteinyl-tRNA(Sec) + phosphate. The protein operates within aminoacyl-tRNA biosynthesis; selenocysteinyl-tRNA(Sec) biosynthesis; selenocysteinyl-tRNA(Sec) from L-seryl-tRNA(Sec) (bacterial route): step 1/1. Functionally, converts seryl-tRNA(Sec) to selenocysteinyl-tRNA(Sec) required for selenoprotein biosynthesis. This Salmonella typhimurium (strain LT2 / SGSC1412 / ATCC 700720) protein is L-seryl-tRNA(Sec) selenium transferase.